The primary structure comprises 42 residues: Serine protease inhibitor 8 (42 aa).

It belongs to the protease inhibitor I3 (leguminous Kunitz-type inhibitor) family. Cortex of potato tuber.

Potent inhibitor of animal pancreatic trypsin (serine protease). The polypeptide is Serine protease inhibitor 8 (Solanum tuberosum (Potato)).